The primary structure comprises 400 residues: Nicotinate phosphoribosyltransferase (400 aa).

Phosphohistidine; by autocatalysis is present on H220.

It belongs to the NAPRTase family. Post-translationally, transiently phosphorylated on a His residue during the reaction cycle. Phosphorylation strongly increases the affinity for substrates and increases the rate of nicotinate D-ribonucleotide production. Dephosphorylation regenerates the low-affinity form of the enzyme, leading to product release.

It carries out the reaction nicotinate + 5-phospho-alpha-D-ribose 1-diphosphate + ATP + H2O = nicotinate beta-D-ribonucleotide + ADP + phosphate + diphosphate. It functions in the pathway cofactor biosynthesis; NAD(+) biosynthesis; nicotinate D-ribonucleotide from nicotinate: step 1/1. In terms of biological role, catalyzes the synthesis of beta-nicotinate D-ribonucleotide from nicotinate and 5-phospho-D-ribose 1-phosphate at the expense of ATP. This is Nicotinate phosphoribosyltransferase from Enterobacter sp. (strain 638).